A 599-amino-acid chain; its full sequence is MTTQVPPSALLPLNPEQLARLQAATTDLTPTQLAWVSGYFWGVLNQQPAALAATPAPAAEMPGITIISASQTGNARRVAEALRDDLLTAKLNVKLVNAGDYKFKQIASEKLLIVVTSTQGEGEPPEEAVALHKFLFSKKAPKLENTAFAVFSLGDSSYEFFCQSGKDFDSKLAELGGERLLDRVDADVEYQAAASEWRARVVDALKSRAPVAAPSQSVATGVVNEIHTSPYSKDAPLVASLSVNQKITGRNSEKDVRHIEIDLGDSGLRYQPGDALGVWYQNDPALVKELVELLWLKGDEPVTVEGKTLPLNEALQWHFELTVNTANIVENYATLTRSETLLPLVGDKAKLQHYAATTPIVDMVRFSPAQLDAEALINLLRPLTPRLYSIASSQEEVENEVHVTVGVVRYDVEGRARAGGASSFLADRVEEEGEVRVFIEHNDNFRLPANPETPVIMIGPGTGIAPFRAFMQQRAADEAPGKNWLFFGNPHFTEDFLYQVEWQRYVKEGVLTRIDLAWSRDQKEKVYVQDKLREQGAELWRWINDGAHIYVCGDANRMAKDVEQALLEVIAEFGGMDTEAADEFLSELRVERRYQRDVY.

The region spanning Ile64–Val202 is the Flavodoxin-like domain. Residues Ser70 to Ala75, Ser117 to Gly120, and Leu153 to Cys162 each bind FMN. The FAD-binding FR-type domain occupies Asp234–Pro448. Residues Thr322, Ala356, Arg386–Ser389, Thr404–Gly406, Tyr410, and Gly419–Ser422 each bind FAD. NADP(+) is bound by residues Ser519–Arg520, Lys525–Gln529, and Asp561. Residue Tyr599 coordinates FAD.

It belongs to the NADPH-dependent sulphite reductase flavoprotein subunit CysJ family. This sequence in the N-terminal section; belongs to the flavodoxin family. In the C-terminal section; belongs to the flavoprotein pyridine nucleotide cytochrome reductase family. Alpha(8)-beta(8). The alpha component is a flavoprotein, the beta component is a hemoprotein. The cofactor is FAD. It depends on FMN as a cofactor.

The enzyme catalyses hydrogen sulfide + 3 NADP(+) + 3 H2O = sulfite + 3 NADPH + 4 H(+). Its pathway is sulfur metabolism; hydrogen sulfide biosynthesis; hydrogen sulfide from sulfite (NADPH route): step 1/1. Functionally, component of the sulfite reductase complex that catalyzes the 6-electron reduction of sulfite to sulfide. This is one of several activities required for the biosynthesis of L-cysteine from sulfate. The flavoprotein component catalyzes the electron flow from NADPH -&gt; FAD -&gt; FMN to the hemoprotein component. The polypeptide is Sulfite reductase [NADPH] flavoprotein alpha-component (Escherichia coli O157:H7).